The sequence spans 396 residues: G-protein coupled receptor 84 (396 aa).

Residues 1–26 (MWNASDVNFSCYHESVLGYRYVAVSW) lie on the Extracellular side of the membrane. 2 N-linked (GlcNAc...) asparagine glycosylation sites follow: N3 and N8. A helical membrane pass occupies residues 27–47 (GIVVAVTGTVGNVLTLLALAI). Topologically, residues 48-57 (QPKLRTRFNL) are cytoplasmic. Residues 58 to 78 (LIANLTVADLLYCTLLQPFSV) form a helical membrane-spanning segment. Over 79 to 94 (DTYLHLHWRTGATFCQ) the chain is Extracellular. Residues 95 to 115 (IFGFLLFVSNSVSILTLCLIA) traverse the membrane as a helical segment. Over 116–144 (LGRYLLIAHPKLFPQVFSAKGIVLALVST) the chain is Cytoplasmic. The helical transmembrane segment at 145-165 (WVVAVASFAPLWPIYILVPVV) threads the bilayer. Over 166–180 (CTCSFDRIRGQPYTT) the chain is Extracellular. The helical transmembrane segment at 181 to 201 (ILMGIYFVVGLSSVGVFYCLI) threads the bilayer. Over 202 to 320 (HQQVKRAAQA…PSEFGKVTRM (119 aa)) the chain is Cytoplasmic. S221 and S224 each carry phosphoserine. Residues 243 to 310 (SGLASGGPSE…TKGAQRAQDS (68 aa)) form a disordered region. A phosphothreonine mark is found at T263 and T264. Residues 321 to 341 (CFAVFLCFTLSYIPFLLLNIL) traverse the membrane as a helical segment. Topologically, residues 342-352 (DAKVQAPRVVH) are extracellular. Residues 353–373 (MLAANLTWLNGCINPVLYAAM) traverse the membrane as a helical segment. The Cytoplasmic segment spans residues 374–396 (NRQFRQAYGSLLRRGPQSFHRFH).

The protein belongs to the G-protein coupled receptor 1 family. As to quaternary structure, interacts with ARRB2 and ARR3. Phosphorylated by a subset of GPR84-activating ligands. Constitutively phosphorylated at Ser-221 and Ser-224 in the absence of 2-HTP. By contrast, Thr-263 and Thr-264 are phosphorylated only following prior cell treatment with 2-HTP.

It is found in the cell membrane. In terms of biological role, g protein-coupled receptor that responds endogenously to dietary fatty acids or nutrient, specifically medium-chain free fatty acid (FFA) with carbon chain lengths of C9 to C14. Capric acid (C10:0), undecanoic acid (C11:0) and lauric acid (C12:0) are the most potent agonists. In immune cells, functions as a pro-inflammatory receptor via 6-OAU and promotes the expression of pro-inflammatory mediators such as TNFalpha, IL-6 and IL-12B as well as stimulating chemotactic responses through activation of signaling mediators AKT, ERK and NF-kappa-B. In addition, triggers increased bacterial adhesion and phagocytosis in macrophages and regulates pro-inflammatory function via enhancing NLRP3 inflammasome activation. Also plays an important role in inflammation by modulating neutrophil functions. Mechanistically, promotes neutrophil chemotaxis, reactive oxygen species (ROS) production and degranulation via LYN-AKT/ERK pathway. To regulate ROS, communicates with the two formyl peptide receptors FPR2 and FPR1 to control the NADPH oxidase activity in neutrophils. This chain is G-protein coupled receptor 84 (GPR84), found in Bos taurus (Bovine).